We begin with the raw amino-acid sequence, 110 residues long: Ribonuclease P protein component 1 (110 aa).

Belongs to the eukaryotic/archaeal RNase P protein component 1 family. Consists of a catalytic RNA component and at least 4-5 protein subunits.

It localises to the cytoplasm. It carries out the reaction Endonucleolytic cleavage of RNA, removing 5'-extranucleotides from tRNA precursor.. Functionally, part of ribonuclease P, a protein complex that generates mature tRNA molecules by cleaving their 5'-ends. The protein is Ribonuclease P protein component 1 of Methanosarcina barkeri (strain Fusaro / DSM 804).